The following is a 397-amino-acid chain: Staphyloferrin A transporter (397 aa).

12 helical membrane-spanning segments follow: residues 10–30 (FLLFLGNWIGQIGLNWFVLTT), 39–59 (IVNFCRLVPILLLSVWAGAIA), 67–87 (LLRITISSSFLVTAILCVLTY), 93–110 (PISVIIIYATLRGILSAV), 137–157 (FIINICRSIGPAIAGVILAVY), 162–182 (TFLAQAICYFIAVLLCLPLHF), 213–233 (IFITSLLIMATGFSYTTLLPV), 245–265 (IFGIAMTMCAIGGIIATLVLP), 271–292 (IGMVNMYYLSSFLFGIALLGVV), 296–313 (IVIMFICITLIGLFSQWA), 333–353 (VLSIIMMDRGMIPLGSLLMSI), and 358–378 (FGIVRTFSIMGISTICITMVF).

This sequence belongs to the major facilitator superfamily.

It localises to the cell membrane. Functionally, involved in staphyloferrin A secretion. The chain is Staphyloferrin A transporter from Staphylococcus aureus (strain NCTC 8325 / PS 47).